Consider the following 38-residue polypeptide: Large ribosomal subunit protein bL36 (38 aa).

Belongs to the bacterial ribosomal protein bL36 family.

The polypeptide is Large ribosomal subunit protein bL36 (Acinetobacter baylyi (strain ATCC 33305 / BD413 / ADP1)).